The following is a 440-amino-acid chain: Putative short-chain fatty acid transporter (440 aa).

The Periplasmic portion of the chain corresponds to 1–19; sequence MIGRISRFMTRFVSRWLPD. A helical transmembrane segment spans residues 20–40; that stretch reads PLIFAMLLTLLTFVIALWLTP. Residues 41–53 lie on the Cytoplasmic side of the membrane; it reads QTPISMVKMWGDG. Residues 54–74 traverse the membrane as a helical segment; that stretch reads FWNLLAFGMQMALIIVTGHAL. The Periplasmic portion of the chain corresponds to 75 to 102; it reads ASSAPVKSLLRTAASAAKTPVQGVMLVT. The helical transmembrane segment at 103–123 threads the bilayer; it reads FFGSVACVINWGFGLVVGAMF. Over 124 to 137 the chain is Cytoplasmic; the sequence is AREVARRVPGSDYP. The next 2 membrane-spanning stretches (helical) occupy residues 138 to 158 and 159 to 179; these read LLIA…SGSM and PLLA…IPVG. Position 180 (Asp180) is a topological domain, cytoplasmic. A helical transmembrane segment spans residues 181 to 201; sequence TLFSGFNIFITVALIVVMPFI. Over 202–244 the chain is Periplasmic; sequence TRMMMPKPSDVVSIDPKLLMEEADFQKQLPKDAPPSERLEESR. 2 helical membrane-spanning segments follow: residues 245–265 and 266–286; these read ILTL…FSEH and GFNI…LLLH. Residues 287–313 are Periplasmic-facing; sequence KTPMAYMRAISAAARSTAGILVQFPFY. A helical membrane pass occupies residues 314-334; it reads AGIQLMMEHSGLGGLITEFFI. The Cytoplasmic segment spans residues 335–351; sequence NVANKDTFPVMTFFSSA. Residues 352–372 form a helical membrane-spanning segment; the sequence is LINFAVPSGGGHWVIQGPFVI. At 373 to 394 the chain is on the periplasmic side; sequence PAAQALGADLGKSVMAIAYGEQ. Residues 395–415 form a helical membrane-spanning segment; that stretch reads WMNMAQPFWALPALAIAGLGV. At 416 to 419 the chain is on the cytoplasmic side; it reads RDIM. Residues 420-440 form a helical membrane-spanning segment; sequence GYCITALLFSGVIFVIGLTLF.

The protein localises to the cell inner membrane. Functionally, may be responsible for the uptake of short-chain fatty acids. This chain is Putative short-chain fatty acid transporter (atoE), found in Escherichia coli (strain K12).